We begin with the raw amino-acid sequence, 301 residues long: Ornithine carbamoyltransferase (301 aa).

Residues R100 and 127 to 130 (HPCQ) each bind carbamoyl phosphate. Residues N158, D221, and 225 to 226 (SM) contribute to the L-ornithine site. C260 and R288 together coordinate carbamoyl phosphate.

This sequence belongs to the aspartate/ornithine carbamoyltransferase superfamily. OTCase family. The enzyme is present as a mixture of trimers and dodecamers, with the relative proportions of the two forms depending on the salt concentration. In addition, the trimeric fraction could reassociate into dodecamers when the salt concentration is increased. It appears that in vivo, the main fraction is in the dodecameric form.

It is found in the cytoplasm. It carries out the reaction carbamoyl phosphate + L-ornithine = L-citrulline + phosphate + H(+). It functions in the pathway amino-acid biosynthesis; L-arginine biosynthesis; L-arginine from L-ornithine and carbamoyl phosphate: step 1/3. Its activity is regulated as follows. Inhibited by excess of arginine and by the bisubstrate delta-N-phosphonoacetyl-L-ornithine (PALO). Its function is as follows. Reversibly catalyzes the transfer of the carbamoyl group from carbamoyl phosphate (CP) to the N(epsilon) atom of ornithine (ORN) to produce L-citrulline, which is a substrate for argininosuccinate synthetase, the enzyme involved in the final step in arginine biosynthesis. The sequence is that of Ornithine carbamoyltransferase from Moritella abyssi.